A 451-amino-acid polypeptide reads, in one-letter code: Nicotinamide phosphoribosyltransferase (451 aa).

Position 209 (Arg209) interacts with diphosphate. Asp232 lines the beta-nicotinamide D-ribonucleotide pocket. His248 and Arg309 together coordinate diphosphate. Beta-nicotinamide D-ribonucleotide contacts are provided by residues Arg309 to Asp311, Gly364 to Asp365, and Arg403.

This sequence belongs to the NAPRTase family.

The enzyme catalyses beta-nicotinamide D-ribonucleotide + diphosphate = 5-phospho-alpha-D-ribose 1-diphosphate + nicotinamide + H(+). It participates in cofactor biosynthesis; NAD(+) biosynthesis; nicotinamide D-ribonucleotide from 5-phospho-alpha-D-ribose 1-diphosphate and nicotinamide: step 1/1. Its function is as follows. Catalyzes the condensation of nicotinamide with 5-phosphoribosyl-1-pyrophosphate to yield nicotinamide mononucleotide, an intermediate in the biosynthesis of NAD. This is Nicotinamide phosphoribosyltransferase from Mycoplasma pneumoniae (strain ATCC 29342 / M129 / Subtype 1) (Mycoplasmoides pneumoniae).